Here is a 567-residue protein sequence, read N- to C-terminus: Wee1-like protein kinase 2 (567 aa).

2 stretches are compositionally biased toward basic and acidic residues: residues 1–12 and 26–36; these read MDDSSINKELKQ and EGQKEAPESRE. Disordered stretches follow at residues 1-103 and 170-191; these read MDDS…DSRS and RSNGKRKTRGDLEEADPGEGKV. The residue at position 77 (serine 77) is a Phosphoserine. Positions 174 to 176 match the Nuclear localization signal motif; sequence KRK. The region spanning 215–494 is the Protein kinase domain; sequence FLEVEKIGVG…ARSRVLRPSL (280 aa). ATP contacts are provided by residues 221-229 and lysine 244; that span reads IGVGEFGTV. The short motif at 318–332 is the Nuclear export signal element; that stretch reads KLKDILLQISLGLKY. Aspartate 342 acts as the Proton acceptor in catalysis. Mg(2+)-binding residues include asparagine 347 and aspartate 384. The stretch at 497–523 forms a coiled coil; sequence AEELQQQLNLEKSKTATLERELREAQQ. The disordered stretch occupies residues 502 to 567; it reads QQLNLEKSKT…SSFTCGKSSP (66 aa). Residues 507–520 are compositionally biased toward basic and acidic residues; the sequence is EKSKTATLERELRE. Positions 555–567 are enriched in polar residues; the sequence is AKSSSFTCGKSSP.

The protein belongs to the protein kinase superfamily. Ser/Thr protein kinase family. WEE1 subfamily. In terms of processing, phosphorylation leads to increase its activity.

It is found in the nucleus. It carries out the reaction L-tyrosyl-[protein] + ATP = O-phospho-L-tyrosyl-[protein] + ADP + H(+). Its function is as follows. Oocyte-specific protein tyrosine kinase that phosphorylates and inhibits CDK1 and acts as a key regulator of meiosis during both prophase I and metaphase II. Required to maintain meiotic arrest in oocytes during the germinal vesicle (GV) stage, a long period of quiescence at dictyate prophase I, by phosphorylating CDK1 at 'Tyr-15', leading to inhibit CDK1 activity and prevent meiotic reentry. Also required for metaphase II exit during egg activation by phosphorylating CDK1 at 'Tyr-15', to ensure exit from meiosis in oocytes and promote pronuclear formation. The sequence is that of Wee1-like protein kinase 2 (WEE2) from Canis lupus familiaris (Dog).